A 269-amino-acid polypeptide reads, in one-letter code: Sororin (269 aa).

Disordered stretches follow at residues methionine 1–arginine 39, valine 56–asparagine 110, and serine 146–asparagine 169. Positions asparagine 57 to valine 66 are enriched in polar residues. Residues lysine 85–asparagine 87 carry the KEN box motif. Residues serine 146–serine 155 show a composition bias toward low complexity. An FGF motif motif is present at residues phenylalanine 180–phenylalanine 182. Positions leucine 247–glutamate 269 are C-terminal Sororin domain.

This sequence belongs to the sororin family. As to quaternary structure, interacts with the APC/C complex. Interacts with the chromatin-bound cohesin complex; the interaction is indirect, occurs after DNA replication and requires acetylation of the cohesin component smc3. Interacts (via the FGF motif) with pds5a and pds5b; the interaction is direct and prevents the interaction of pds5a with wapl. Ubiquitinated by the APC/C complex in G1, leading to its degradation.

The protein resides in the nucleus. It is found in the chromosome. It localises to the cytoplasm. Regulator of sister chromatid cohesion in mitosis stabilizing cohesin complex association with chromatin. May antagonize the action of wapl which stimulates cohesin dissociation from chromatin. Cohesion ensures that chromosome partitioning is accurate in both meiotic and mitotic cells and plays an important role in DNA repair. Required for efficient DNA double-stranded break repair. In Xenopus laevis (African clawed frog), this protein is Sororin (cdca5-a).